A 186-amino-acid chain; its full sequence is Protein GrpE (186 aa).

The segment covering 1-15 (MADEQQTLDQQTPEQ) has biased composition (polar residues). The tract at residues 1 to 20 (MADEQQTLDQQTPEQPTGAA) is disordered.

The protein belongs to the GrpE family. Homodimer.

The protein resides in the cytoplasm. Its function is as follows. Participates actively in the response to hyperosmotic and heat shock by preventing the aggregation of stress-denatured proteins, in association with DnaK and GrpE. It is the nucleotide exchange factor for DnaK and may function as a thermosensor. Unfolded proteins bind initially to DnaJ; upon interaction with the DnaJ-bound protein, DnaK hydrolyzes its bound ATP, resulting in the formation of a stable complex. GrpE releases ADP from DnaK; ATP binding to DnaK triggers the release of the substrate protein, thus completing the reaction cycle. Several rounds of ATP-dependent interactions between DnaJ, DnaK and GrpE are required for fully efficient folding. The protein is Protein GrpE of Pseudomonas aeruginosa (strain LESB58).